The chain runs to 88 residues: Small ribosomal subunit protein uS15 (88 aa).

This sequence belongs to the universal ribosomal protein uS15 family. In terms of assembly, part of the 30S ribosomal subunit. Forms a bridge to the 50S subunit in the 70S ribosome, contacting the 23S rRNA.

In terms of biological role, one of the primary rRNA binding proteins, it binds directly to 16S rRNA where it helps nucleate assembly of the platform of the 30S subunit by binding and bridging several RNA helices of the 16S rRNA. Forms an intersubunit bridge (bridge B4) with the 23S rRNA of the 50S subunit in the ribosome. This is Small ribosomal subunit protein uS15 from Mycoplasmopsis synoviae (strain 53) (Mycoplasma synoviae).